The sequence spans 601 residues: Molybdenum cofactor synthesis protein cinnamon (601 aa).

The tract at residues 3 to 153 (SITFGVLTIS…TISALLPHAV (151 aa)) is MPT adenylyltransferase. The tract at residues 173–195 (SAQKSHICPHKTGTGTDSDRNSP) is disordered. The interval 184 to 596 (TGTGTDSDRN…FPASVLRFDF (413 aa)) is MPT Mo-transferase. Ser-376 carries the post-translational modification Phosphoserine.

It in the N-terminal section; belongs to the MoaB/Mog family. This sequence in the C-terminal section; belongs to the MoeA family. It depends on Mg(2+) as a cofactor.

It carries out the reaction molybdopterin + ATP + H(+) = adenylyl-molybdopterin + diphosphate. The catalysed reaction is adenylyl-molybdopterin + molybdate = Mo-molybdopterin + AMP + H(+). It participates in cofactor biosynthesis; molybdopterin biosynthesis. Functionally, catalyzes two steps in the biosynthesis of the molybdenum cofactor. In the first step, molybdopterin is adenylated. Subsequently, molybdate is inserted into adenylated molybdopterin and AMP is released. The protein is Molybdenum cofactor synthesis protein cinnamon (cin) of Drosophila melanogaster (Fruit fly).